The chain runs to 324 residues: Cytochrome c biogenesis protein CcsA (324 aa).

The next 8 membrane-spanning stretches (helical) occupy residues 15–35, 44–64, 71–91, 98–118, 143–163, 228–248, 255–275, and 289–309; these read FSIV…DEII, GMIA…IYSG, LYES…VPYF, LSTI…SGLL, MILG…LLVL, VISL…VWAN, WNWD…AVYL, and AIVA…VNLL.

Belongs to the CcmF/CycK/Ccl1/NrfE/CcsA family. In terms of assembly, may interact with Ccs1.

It is found in the plastid. The protein localises to the chloroplast thylakoid membrane. Its function is as follows. Required during biogenesis of c-type cytochromes (cytochrome c6 and cytochrome f) at the step of heme attachment. This chain is Cytochrome c biogenesis protein CcsA, found in Daucus carota (Wild carrot).